We begin with the raw amino-acid sequence, 605 residues long: Elongation factor 4 (605 aa).

The region spanning 8–190 (RRVRNFCIVA…AIITRIPPPQ (183 aa)) is the tr-type G domain. GTP contacts are provided by residues 20–25 (DHGKST) and 137–140 (NKID).

The protein belongs to the TRAFAC class translation factor GTPase superfamily. Classic translation factor GTPase family. LepA subfamily.

The protein localises to the cell inner membrane. The catalysed reaction is GTP + H2O = GDP + phosphate + H(+). In terms of biological role, required for accurate and efficient protein synthesis under certain stress conditions. May act as a fidelity factor of the translation reaction, by catalyzing a one-codon backward translocation of tRNAs on improperly translocated ribosomes. Back-translocation proceeds from a post-translocation (POST) complex to a pre-translocation (PRE) complex, thus giving elongation factor G a second chance to translocate the tRNAs correctly. Binds to ribosomes in a GTP-dependent manner. This chain is Elongation factor 4, found in Treponema pallidum (strain Nichols).